We begin with the raw amino-acid sequence, 426 residues long: Serine hydroxymethyltransferase (426 aa).

(6S)-5,6,7,8-tetrahydrofolate-binding positions include Leu-113 and 117-119 (GHL). Residue Lys-222 is modified to N6-(pyridoxal phosphate)lysine. 363-365 (SAF) lines the (6S)-5,6,7,8-tetrahydrofolate pocket.

It belongs to the SHMT family. Homodimer. Pyridoxal 5'-phosphate is required as a cofactor.

The protein resides in the cytoplasm. It catalyses the reaction (6R)-5,10-methylene-5,6,7,8-tetrahydrofolate + glycine + H2O = (6S)-5,6,7,8-tetrahydrofolate + L-serine. The protein operates within one-carbon metabolism; tetrahydrofolate interconversion. Its pathway is amino-acid biosynthesis; glycine biosynthesis; glycine from L-serine: step 1/1. Functionally, catalyzes the reversible interconversion of serine and glycine with tetrahydrofolate (THF) serving as the one-carbon carrier. This reaction serves as the major source of one-carbon groups required for the biosynthesis of purines, thymidylate, methionine, and other important biomolecules. Also exhibits THF-independent aldolase activity toward beta-hydroxyamino acids, producing glycine and aldehydes, via a retro-aldol mechanism. This Phocaeicola vulgatus (strain ATCC 8482 / DSM 1447 / JCM 5826 / CCUG 4940 / NBRC 14291 / NCTC 11154) (Bacteroides vulgatus) protein is Serine hydroxymethyltransferase.